Here is a 370-residue protein sequence, read N- to C-terminus: tRNA (guanine(26)-N(2))-dimethyltransferase (370 aa).

Residues 4–368 enclose the Trm1 methyltransferase domain; the sequence is TWVTEGRTTI…APLEEIRDCI (365 aa). Positions 41, 66, 82, 108, and 109 each coordinate S-adenosyl-L-methionine. 4 residues coordinate Zn(2+): Cys237, Cys240, Cys256, and Cys259.

This sequence belongs to the class I-like SAM-binding methyltransferase superfamily. Trm1 family.

It carries out the reaction guanosine(26) in tRNA + 2 S-adenosyl-L-methionine = N(2)-dimethylguanosine(26) in tRNA + 2 S-adenosyl-L-homocysteine + 2 H(+). Functionally, dimethylates a single guanine residue at position 26 of a number of tRNAs using S-adenosyl-L-methionine as donor of the methyl groups. This chain is tRNA (guanine(26)-N(2))-dimethyltransferase, found in Methanospirillum hungatei JF-1 (strain ATCC 27890 / DSM 864 / NBRC 100397 / JF-1).